The sequence spans 156 residues: Small ribosomal subunit protein uS7 (156 aa).

The protein belongs to the universal ribosomal protein uS7 family. As to quaternary structure, part of the 30S ribosomal subunit. Contacts proteins S9 and S11.

In terms of biological role, one of the primary rRNA binding proteins, it binds directly to 16S rRNA where it nucleates assembly of the head domain of the 30S subunit. Is located at the subunit interface close to the decoding center, probably blocks exit of the E-site tRNA. The sequence is that of Small ribosomal subunit protein uS7 from Bradyrhizobium diazoefficiens (strain JCM 10833 / BCRC 13528 / IAM 13628 / NBRC 14792 / USDA 110).